The chain runs to 457 residues: MRKGIQPALEQYLVTAGGGEGAAVVAAAAAASMDKRALLASPGFAAAAAPGTYIQILTTNPSTTSCATSLQSGALTAGPLLPSVPGTEPAASSLYTTPQGPSSRVGLLQQPPAPGRGGGGGPPAKRRLELGESGHQYLSDGLKTPKGKGRAALRSPDSPKTPKSPSEKTRYDTSLGLLTKKFIQLLSQSPDGVLDLNKAAEVLKVQKRRIYDITNVLEGIHLIKKKSKNNVQWMGCSLSEDGGMLAQCQGLSKEVTELSQEEKKLDELIQSCTLDLKLLTEDSENQRLAYVTYQDIRKISGLKDQTVIVVKAPPETRLEVPDSIESLQIHLASTQGPIEVYLCPEETETHRPMKTNNQDHNGNIPKPTSKDLASNNSGHSDCSVSTANLSPLASPANLLQQTEDQIPSNLEGPFVNLLPPLLQEDYLLSLGEEEGISDLFDAYDLEKLPLVEDFMCS.

Residues 80-171 (LLPSVPGTEP…PKSPSEKTRY (92 aa)) form a disordered region. Residues 93–102 (SLYTTPQGPS) are compositionally biased toward polar residues. Residues 96–145 (TTPQGPSSRVGLLQQPPAPGRGGGGGPPAKRRLELGESGHQYLSDGLKTP) form a cyclin A/CDK2 binding region. The DNA-binding element occupies 147–237 (GKGRAALRSP…KNNVQWMGCS (91 aa)). Residues 155 to 164 (SPDSPKTPKS) are compositionally biased toward low complexity. The tract at residues 196-217 (LNKAAEVLKVQKRRIYDITNVL) is leucine-zipper. Residues 201 to 237 (EVLKVQKRRIYDITNVLEGIHLIKKKSKNNVQWMGCS) carry the DEF box motif. The tract at residues 238-329 (LSEDGGMLAQ…VPDSIESLQI (92 aa)) is dimerization. The segment at 350–387 (HRPMKTNNQDHNGNIPKPTSKDLASNNSGHSDCSVSTA) is disordered. Residues 371-387 (DLASNNSGHSDCSVSTA) show a composition bias toward polar residues. The interval 383–457 (SVSTANLSPL…LPLVEDFMCS (75 aa)) is transactivation. Positions 424–441 (EDYLLSLGEEEGISDLFD) are retinoblastoma protein binding.

This sequence belongs to the E2F/DP family. As to quaternary structure, component of the DRTF1/E2F transcription factor complex. Binds cooperatively with TFDP1/Dp-1 to E2F sites. Interacts with retinoblastoma protein RB1 and related proteins (such as RBL1) that inhibit the E2F transactivation domain. Binds EAPP.

It is found in the nucleus. Functionally, transcription activator that binds DNA cooperatively with DP proteins through the E2 recognition site, 5'-TTTC[CG]CGC-3' found in the promoter region of a number of genes whose products are involved in cell cycle regulation or in DNA replication. The DRTF1/E2F complex functions in the control of cell-cycle progression from G1 to S phase. E2F3 binds specifically to RB1 in a cell-cycle dependent manner. Inhibits adipogenesis, probably through the repression of CEBPA binding to its target gene promoters. The chain is Transcription factor E2F3 (E2f3) from Mus musculus (Mouse).